Here is a 64-residue protein sequence, read N- to C-terminus: Large ribosomal subunit protein bL35 (64 aa).

It belongs to the bacterial ribosomal protein bL35 family.

The sequence is that of Large ribosomal subunit protein bL35 from Streptomyces avermitilis (strain ATCC 31267 / DSM 46492 / JCM 5070 / NBRC 14893 / NCIMB 12804 / NRRL 8165 / MA-4680).